The following is a 443-amino-acid chain: Probable protein S-acyltransferase 7 (443 aa).

2 consecutive transmembrane segments (helical) span residues 44–64 and 76–96; these read SLAL…IFVA and GVSI…LLLL. In terms of domain architecture, DHHC spans 149–199; sequence KYCDTCMLYRPPRCSHCSICNNCVERFDHHCPWVGQCIGMRNYRFFFMFVF. Cysteine 179 functions as the S-palmitoyl cysteine intermediate in the catalytic mechanism. 2 helical membrane-spanning segments follow: residues 193 to 213 and 237 to 257; these read FFFM…AFCW and SIVL…LTVF. Residues serine 327 and serine 377 each carry the phosphoserine modification. The span at 382-392 shows a compositional bias: basic and acidic residues; it reads ATVDEQSDRPS. The tract at residues 382–443 is disordered; the sequence is ATVDEQSDRP…SGLVTENRPT (62 aa). Serine 406 is modified (phosphoserine).

The protein belongs to the DHHC palmitoyltransferase family.

The protein resides in the cell membrane. The catalysed reaction is L-cysteinyl-[protein] + hexadecanoyl-CoA = S-hexadecanoyl-L-cysteinyl-[protein] + CoA. In terms of biological role, palmitoyl acyltransferase. This is Probable protein S-acyltransferase 7 (PAT07) from Arabidopsis thaliana (Mouse-ear cress).